The sequence spans 967 residues: RNA polymerase-associated protein RapA (967 aa).

The region spanning Glu-163–Asp-337 is the Helicase ATP-binding domain. Asp-176–Thr-183 is an ATP binding site. The DEAH box motif lies at Asp-283 to His-286. The 172-residue stretch at Arg-489–Glu-660 folds into the Helicase C-terminal domain.

It belongs to the SNF2/RAD54 helicase family. RapA subfamily. As to quaternary structure, interacts with the RNAP. Has a higher affinity for the core RNAP than for the holoenzyme. Its ATPase activity is stimulated by binding to RNAP.

Its function is as follows. Transcription regulator that activates transcription by stimulating RNA polymerase (RNAP) recycling in case of stress conditions such as supercoiled DNA or high salt concentrations. Probably acts by releasing the RNAP, when it is trapped or immobilized on tightly supercoiled DNA. Does not activate transcription on linear DNA. Probably not involved in DNA repair. The chain is RNA polymerase-associated protein RapA from Pasteurella multocida (strain Pm70).